The following is a 442-amino-acid chain: tRNA-2-methylthio-N(6)-dimethylallyladenosine synthase (442 aa).

The MTTase N-terminal domain maps to 3–118; that stretch reads KKVFIKTFGC…LPELLNARAA (116 aa). [4Fe-4S] cluster contacts are provided by C12, C49, C81, C155, C159, and C162. Residues 141-374 enclose the Radical SAM core domain; it reads RVEGSSAFVS…QAVINNNIKD (234 aa). A TRAM domain is found at 377–440; sequence DERVGTVQRL…TFTLRGEVVV (64 aa).

This sequence belongs to the methylthiotransferase family. MiaB subfamily. Monomer. [4Fe-4S] cluster serves as cofactor.

It localises to the cytoplasm. The enzyme catalyses N(6)-dimethylallyladenosine(37) in tRNA + (sulfur carrier)-SH + AH2 + 2 S-adenosyl-L-methionine = 2-methylsulfanyl-N(6)-dimethylallyladenosine(37) in tRNA + (sulfur carrier)-H + 5'-deoxyadenosine + L-methionine + A + S-adenosyl-L-homocysteine + 2 H(+). Catalyzes the methylthiolation of N6-(dimethylallyl)adenosine (i(6)A), leading to the formation of 2-methylthio-N6-(dimethylallyl)adenosine (ms(2)i(6)A) at position 37 in tRNAs that read codons beginning with uridine. The sequence is that of tRNA-2-methylthio-N(6)-dimethylallyladenosine synthase from Delftia acidovorans (strain DSM 14801 / SPH-1).